The primary structure comprises 184 residues: MSAERLVYVMGPSGAGKDSLLAYARKHVREPRIAFAHRYITRKSDGHENHVELTRDEFAARAQLGFFALEWSSHGFRYGVGVEIDAWLAAGSVVVVSGSRAHLPAALERYPQMCVVHIDAAPHVLAERLATRGRETADEIRARLARSVRWAVPDGIALTAIDNSGTLDDAGRVLVALLEGLARS.

11-18 (GPSGAGKD) provides a ligand contact to ATP.

This sequence belongs to the ribose 1,5-bisphosphokinase family.

The enzyme catalyses alpha-D-ribose 1,5-bisphosphate + ATP = 5-phospho-alpha-D-ribose 1-diphosphate + ADP. The protein operates within metabolic intermediate biosynthesis; 5-phospho-alpha-D-ribose 1-diphosphate biosynthesis; 5-phospho-alpha-D-ribose 1-diphosphate from D-ribose 5-phosphate (route II): step 3/3. Functionally, catalyzes the phosphorylation of ribose 1,5-bisphosphate to 5-phospho-D-ribosyl alpha-1-diphosphate (PRPP). The polypeptide is Ribose 1,5-bisphosphate phosphokinase PhnN (Burkholderia mallei (strain SAVP1)).